The sequence spans 643 residues: tRNA 5-methylaminomethyl-2-thiouridine biosynthesis bifunctional protein MnmC (643 aa).

Residues 1–223 form a tRNA (mnm(5)s(2)U34)-methyltransferase region; sequence MPDRLVSATL…VDDRLVGDYA (223 aa). The segment at 247-643 is FAD-dependent cmnm(5)s(2)U34 oxidoreductase; it reads IGAGLAGCAV…LRARRVGSAG (397 aa).

This sequence in the N-terminal section; belongs to the methyltransferase superfamily. tRNA (mnm(5)s(2)U34)-methyltransferase family. In the C-terminal section; belongs to the DAO family. FAD is required as a cofactor.

The protein localises to the cytoplasm. The catalysed reaction is 5-aminomethyl-2-thiouridine(34) in tRNA + S-adenosyl-L-methionine = 5-methylaminomethyl-2-thiouridine(34) in tRNA + S-adenosyl-L-homocysteine + H(+). Catalyzes the last two steps in the biosynthesis of 5-methylaminomethyl-2-thiouridine (mnm(5)s(2)U) at the wobble position (U34) in tRNA. Catalyzes the FAD-dependent demodification of cmnm(5)s(2)U34 to nm(5)s(2)U34, followed by the transfer of a methyl group from S-adenosyl-L-methionine to nm(5)s(2)U34, to form mnm(5)s(2)U34. The chain is tRNA 5-methylaminomethyl-2-thiouridine biosynthesis bifunctional protein MnmC from Burkholderia orbicola (strain AU 1054).